Reading from the N-terminus, the 702-residue chain is Polyribonucleotide nucleotidyltransferase (702 aa).

Residues D485 and D491 each contribute to the Mg(2+) site. The KH domain maps to 552-611; that stretch reads PKTSTLQIDPEKIRDVIGAGGKVINKIIADTGVKIDIKEDGLVYVSSAESEGVKEAVKII. One can recognise an S1 motif domain in the interval 621–689; that stretch reads GEIYLGKVTK…SQGRINLSRK (69 aa).

This sequence belongs to the polyribonucleotide nucleotidyltransferase family. Mg(2+) serves as cofactor.

The protein resides in the cytoplasm. The enzyme catalyses RNA(n+1) + phosphate = RNA(n) + a ribonucleoside 5'-diphosphate. Its function is as follows. Involved in mRNA degradation. Catalyzes the phosphorolysis of single-stranded polyribonucleotides processively in the 3'- to 5'-direction. In Clostridium perfringens (strain SM101 / Type A), this protein is Polyribonucleotide nucleotidyltransferase.